Reading from the N-terminus, the 948-residue chain is Phosphoenolpyruvate carboxylase (948 aa).

Residues His138 and Lys610 contribute to the active site.

The protein belongs to the PEPCase type 1 family. Mg(2+) is required as a cofactor.

It carries out the reaction oxaloacetate + phosphate = phosphoenolpyruvate + hydrogencarbonate. Functionally, forms oxaloacetate, a four-carbon dicarboxylic acid source for the tricarboxylic acid cycle. The sequence is that of Phosphoenolpyruvate carboxylase from Streptococcus sanguinis (strain SK36).